The following is a 199-amino-acid chain: 7-methyl-GTP pyrophosphatase (199 aa).

D76 acts as the Proton acceptor in catalysis.

It belongs to the Maf family. YceF subfamily. The cofactor is a divalent metal cation.

It is found in the cytoplasm. The enzyme catalyses N(7)-methyl-GTP + H2O = N(7)-methyl-GMP + diphosphate + H(+). In terms of biological role, nucleoside triphosphate pyrophosphatase that hydrolyzes 7-methyl-GTP (m(7)GTP). May have a dual role in cell division arrest and in preventing the incorporation of modified nucleotides into cellular nucleic acids. The polypeptide is 7-methyl-GTP pyrophosphatase (Hahella chejuensis (strain KCTC 2396)).